The sequence spans 327 residues: MEGSNGFGIDSILSHRAGSPALPKGDPLLGDCRSPLELSPRSESSSDCSSPASPGRDCLETSTSRPGAASGPGLDSHLQPGQLSAPAQSRTVTSSFLIRDILADCKPLAACAPYSSSGQPAAPEPGGRLAAKAGEDFRDKLDKSVSSASSDSEYKVKEEGDREISSSRDSPPVRLKKPRKARTAFTDHQLAQLERSFERQKYLSVQDRMELAASLNLTDTQVKTWYQNRRTKWKRQTAVGLELLAEAGNYSALQRMFPSPYFYPQSLVSNLDPGAALYLYRGPSAPPPALQRPLVPRILIHGLQGASEPPPPLPPLPGVLPRAAQPR.

Disordered stretches follow at residues 1 to 90 (MEGS…AQSR), 113 to 181 (PYSS…PRKA), and 303 to 327 (LQGA…AQPR). The span at 33–54 (RSPLELSPRSESSSDCSSPASP) shows a compositional bias: low complexity. The span at 79–90 (QPGQLSAPAQSR) shows a compositional bias: polar residues. Composition is skewed to basic and acidic residues over residues 133–143 (AGEDFRDKLDK) and 152–166 (SEYK…EISS). Residues 178–237 (PRKARTAFTDHQLAQLERSFERQKYLSVQDRMELAASLNLTDTQVKTWYQNRRTKWKRQT) constitute a DNA-binding region (homeobox). Residues 308-318 (EPPPPLPPLPG) are compositionally biased toward pro residues.

Belongs to the BAR homeobox family.

It is found in the nucleus. The protein is BarH-like 1 homeobox protein (Barhl1) of Mus musculus (Mouse).